We begin with the raw amino-acid sequence, 977 residues long: 2-oxoglutarate dehydrogenase E1 component (977 aa).

One can recognise an RPE1 insert domain in the interval 77 to 125 (VLNNRHLAKPAYREEFKGDTERSTAAYIDIREDASTGSTSKLPLEAKFG).

Belongs to the alpha-ketoglutarate dehydrogenase family. Homodimer. Part of the 2-oxoglutarate dehydrogenase (OGDH) complex composed of E1 (2-oxoglutarate dehydrogenase), E2 (dihydrolipoamide succinyltransferase) and E3 (dihydrolipoamide dehydrogenase); the complex contains multiple copies of the three enzymatic components (E1, E2 and E3). Thiamine diphosphate is required as a cofactor.

The catalysed reaction is N(6)-[(R)-lipoyl]-L-lysyl-[protein] + 2-oxoglutarate + H(+) = N(6)-[(R)-S(8)-succinyldihydrolipoyl]-L-lysyl-[protein] + CO2. E1 component of the 2-oxoglutarate dehydrogenase (OGDH) complex which catalyzes the decarboxylation of 2-oxoglutarate, the first step in the conversion of 2-oxoglutarate to succinyl-CoA and CO(2). The sequence is that of 2-oxoglutarate dehydrogenase E1 component (sucA) from Rickettsia felis (strain ATCC VR-1525 / URRWXCal2) (Rickettsia azadi).